The following is a 946-amino-acid chain: Protein dct-6 (946 aa).

Residues 326-363 (YMDMNDQIEQMIALLVDQLEELEKLEQLCDEVQKTGNQ) are a coiled coil.

May have a role in tumor suppression. The chain is Protein dct-6 from Caenorhabditis briggsae.